Consider the following 301-residue polypeptide: Phosducin-like protein (301 aa).

Threonine 2 bears the N-acetylthreonine mark. Residues 15–53 (YYYSSSEEEDSDHEDKDRGRGALAGSSMPADADLAGEGI) form a disordered region. Phosphoserine occurs at positions 20, 25, 226, 293, and 296. A Phosducin domain is found at 37-299 (LAGSSMPADA…TCHSEDSDLE (263 aa)). The interval 158-301 (FKQVFEIPSG…HSEDSDLEID (144 aa)) is thioredoxin fold.

Belongs to the phosducin family. As to quaternary structure, forms a complex with the beta and gamma subunits of the GTP-binding protein, transducin. Interacts with the CCT chaperonin complex.

The protein localises to the cell projection. Its subcellular location is the cilium. In terms of biological role, functions as a co-chaperone for CCT in the assembly of heterotrimeric G protein complexes, facilitates the assembly of both Gbeta-Ggamma and RGS-Gbeta5 heterodimers. Also acts as a positive regulator of hedgehog signaling and regulates ciliary function. The protein is Phosducin-like protein (PDCL) of Bos taurus (Bovine).